A 200-amino-acid chain; its full sequence is Small ribosomal subunit protein uS4 (200 aa).

The segment at threonine 22–lysine 42 is disordered. The S4 RNA-binding domain maps to alanine 92 to lysine 152.

Belongs to the universal ribosomal protein uS4 family. In terms of assembly, part of the 30S ribosomal subunit. Contacts protein S5. The interaction surface between S4 and S5 is involved in control of translational fidelity.

Its function is as follows. One of the primary rRNA binding proteins, it binds directly to 16S rRNA where it nucleates assembly of the body of the 30S subunit. Functionally, with S5 and S12 plays an important role in translational accuracy. This Bacillus cereus (strain B4264) protein is Small ribosomal subunit protein uS4.